The primary structure comprises 434 residues: Adenylosuccinate synthetase (434 aa).

GTP is bound by residues glycine 25–lysine 31 and glycine 53–threonine 55. The active-site Proton acceptor is aspartate 26. Mg(2+) contacts are provided by aspartate 26 and glycine 53. Residues aspartate 26–lysine 29, asparagine 51–histidine 54, threonine 142, arginine 156, asparagine 233, threonine 248, and arginine 312 contribute to the IMP site. Histidine 54 acts as the Proton donor in catalysis. Valine 308–arginine 314 contacts substrate. Residues arginine 314, lysine 340 to aspartate 342, and glycine 422 to glycine 424 contribute to the GTP site.

This sequence belongs to the adenylosuccinate synthetase family. Homodimer. It depends on Mg(2+) as a cofactor.

Its subcellular location is the cytoplasm. It carries out the reaction IMP + L-aspartate + GTP = N(6)-(1,2-dicarboxyethyl)-AMP + GDP + phosphate + 2 H(+). It functions in the pathway purine metabolism; AMP biosynthesis via de novo pathway; AMP from IMP: step 1/2. Its activity is regulated as follows. Competitively Inhibited by GMP. Allosterically inhibited by AMP. In terms of biological role, plays an important role in the de novo pathway and in the salvage pathway of purine nucleotide biosynthesis. Catalyzes the first committed step in the biosynthesis of AMP from IMP. The sequence is that of Adenylosuccinate synthetase (ade2) from Schizosaccharomyces pombe (strain 972 / ATCC 24843) (Fission yeast).